The chain runs to 335 residues: RNA polymerase sigma factor RpoS (335 aa).

A sigma-70 factor domain-1 region spans residues aspartate 57–alanine 90. The tract at residues methionine 95–threonine 165 is sigma-70 factor domain-2. The short motif at aspartate 119–glutamate 122 is the Interaction with polymerase core subunit RpoC element. A sigma-70 factor domain-3 region spans residues glutamate 175–serine 250. The tract at residues tryptophan 263–glutamate 316 is sigma-70 factor domain-4. Residues leucine 289 to valine 308 constitute a DNA-binding region (H-T-H motif).

It belongs to the sigma-70 factor family. RpoS subfamily. In terms of assembly, interacts with the RNA polymerase core enzyme.

The protein resides in the cytoplasm. Functionally, sigma factors are initiation factors that promote the attachment of RNA polymerase to specific initiation sites and are then released. This sigma factor is the master transcriptional regulator of the stationary phase and the general stress response. May be required for the persistence of V.cholerae in aquatic habitats. The chain is RNA polymerase sigma factor RpoS from Vibrio cholerae serotype O1 (strain ATCC 39315 / El Tor Inaba N16961).